Reading from the N-terminus, the 275-residue chain is Energy-coupling factor transporter ATP-binding protein EcfA1 (275 aa).

In terms of domain architecture, ABC transporter spans 5 to 240; that stretch reads IDVKNLSFRY…NDLDQIGLDD (236 aa). 40–47 provides a ligand contact to ATP; it reads GHNGSGKS.

Belongs to the ABC transporter superfamily. Energy-coupling factor EcfA family. In terms of assembly, forms a stable energy-coupling factor (ECF) transporter complex composed of 2 membrane-embedded substrate-binding proteins (S component), 2 ATP-binding proteins (A component) and 2 transmembrane proteins (T component).

The protein localises to the cell membrane. ATP-binding (A) component of a common energy-coupling factor (ECF) ABC-transporter complex. Unlike classic ABC transporters this ECF transporter provides the energy necessary to transport a number of different substrates. This chain is Energy-coupling factor transporter ATP-binding protein EcfA1, found in Streptococcus pneumoniae serotype 4 (strain ATCC BAA-334 / TIGR4).